Consider the following 595-residue polypeptide: APOBEC1 complementation factor (595 aa).

3 consecutive RRM domains span residues 56-134 (CEIF…ASVD), 136-218 (CRLF…WAEP), and 231-303 (KILY…LAKP). The required for nuclear localization stretch occupies residues 360–409 (HFPATKGHLSNRALIRTPSVREIYMNVPVGAAGVRGLGGRGYLAYTGLGR).

As to quaternary structure, part of the apolipoprotein B mRNA editing complex with APOBEC1. Interacts with TNPO2; TNPO2 may be responsible for transport of A1CF into the nucleus. Interacts with SYNCRIP. Interacts with CELF2/CUGBP2. Interacts with RBM47. Expressed primarily in liver, small intestine and kidney.

It localises to the nucleus. Its subcellular location is the endoplasmic reticulum. The protein localises to the cytoplasm. Functionally, essential component of the apolipoprotein B mRNA editing enzyme complex which is responsible for the postranscriptional editing of a CAA codon for Gln to a UAA codon for stop in APOB mRNA. Binds to APOB mRNA and is probably responsible for docking the catalytic subunit, APOBEC1, to the mRNA to allow it to deaminate its target cytosine. The complex also seems to protect the edited APOB mRNA from nonsense-mediated decay. This is APOBEC1 complementation factor (A1cf) from Mus musculus (Mouse).